The primary structure comprises 4582 residues: Probable transcription-associated protein 1 (4582 aa).

Pro residues predominate over residues 1 to 11; sequence MSTNPPQPPPS. Disordered regions lie at residues 1 to 52, 219 to 276, 556 to 581, 794 to 821, 1152 to 1195, 1483 to 1570, 2341 to 2410, 2537 to 2567, 2637 to 2662, and 2741 to 2789; these read MSTN…SSGN, TTTA…TTTT, KEKEKELKDPQSLKDKLDGLSSANTT, VGGSGGSNSSGGGGGGGSNSSNNSTNSN, ENEN…NNNI, QSTT…STIN, SIKT…NIDD, TTTTPVSSTTTTEQSSDSSSLPPPPPVQVTK, SDGGTGSLANKPLSSSGSTSQTGGAS, and SPST…TTTE. A compositionally biased stretch (polar residues) spans 25–37; sequence PMSTTNPSQPTIT. Composition is skewed to low complexity over residues 38–50, 219–250, and 258–276; these read SSSAASSSSSSSS, TTTAISPTTTTTTTPATATTPATTTATGNTIT, and PSTTATAISPTSSTTTTTT. Positions 556–573 are enriched in basic and acidic residues; that stretch reads KEKEKELKDPQSLKDKLD. Residues 794-811 are compositionally biased toward gly residues; it reads VGGSGGSNSSGGGGGGGS. Low complexity-rich tracts occupy residues 812–821, 1158–1194, 1484–1504, 1515–1568, and 2341–2367; these read NSSNNSTNSN, DNNNNNNNNNNNNNNNNNNNNNNNNNNNNNNNNNNNN, STTTASTTETAATTTTTETAT, TEPT…SSST, and SIKTSSSSLPTTTTTTTSSNKPTDSSS. The span at 2378–2398 shows a compositional bias: polar residues; it reads SITTPSQGGVATPNVSDSTPT. Composition is skewed to low complexity over residues 2537 to 2556 and 2650 to 2662; these read TTTTPVSSTTTTEQSSDSSS and SSSGSTSQTGGAS. Residues 2944–2991 are a coiled coil; that stretch reads NDINQQQQQQQQQQQQQQQQQQQQQQQQQQQQQQQQQQQQQQHHQQEQ. The region spanning 3185-3815 is the FAT domain; that stretch reads VISFLGENYN…YYHFRKLVLE (631 aa). Low complexity-rich tracts occupy residues 3491 to 3509 and 3824 to 3916; these read TNTTTTITNPDGTTTTTTT and TTSP…ANTT. 2 disordered regions span residues 3491-3517 and 3821-3928; these read TNTTTTITNPDGTTTTTTTPLPPPQQP and SKFT…FSPL. One can recognise a PI3K/PI4K catalytic domain in the interval 4171 to 4541; it reads VCPRITLYGG…MLENRIDSLT (371 aa). A G-loop region spans residues 4177–4183; that stretch reads LYGGNGK. Residues 4312–4337 are disordered; the sequence is NITEDNNISSSSSSSSSSGSNSGENS. Residues 4320 to 4337 show a composition bias toward low complexity; it reads SSSSSSSSSSGSNSGENS. Residues 4400–4408 form a catalytic loop region; it reads DIGDIDPSK. The interval 4429 to 4451 is activation loop; that stretch reads NRKLGFDLLQDNPYNQQQLLRLS. An FATC domain is found at 4538 to 4582; it reads DSLTPSSQPDKTCFISPIVKKVNQLIQNSLSSNISQLDQLSCPWL.

It belongs to the PI3/PI4-kinase family. TRA1 subfamily.

This Dictyostelium discoideum (Social amoeba) protein is Probable transcription-associated protein 1 (tra1).